The chain runs to 230 residues: Protein-L-isoaspartate O-methyltransferase (230 aa).

Residue serine 68 is part of the active site.

This sequence belongs to the methyltransferase superfamily. L-isoaspartyl/D-aspartyl protein methyltransferase family.

The protein resides in the cytoplasm. The enzyme catalyses [protein]-L-isoaspartate + S-adenosyl-L-methionine = [protein]-L-isoaspartate alpha-methyl ester + S-adenosyl-L-homocysteine. Functionally, catalyzes the methyl esterification of L-isoaspartyl residues in peptides and proteins that result from spontaneous decomposition of normal L-aspartyl and L-asparaginyl residues. It plays a role in the repair and/or degradation of damaged proteins. The polypeptide is Protein-L-isoaspartate O-methyltransferase (Salinibacter ruber (strain DSM 13855 / M31)).